A 395-amino-acid polypeptide reads, in one-letter code: Probable nitrate/nitrite transporter NarK2 (395 aa).

Helical transmembrane passes span 8–28 (LVLA…IGPL), 45–65 (LLVA…GPLT), 72–92 (AMLI…GVAA), 98–118 (ALLV…AVGI), 131–151 (GFST…AFFT), 157–177 (WFGL…TAVV), 205–225 (LPVT…FVAF), 244–266 (AGAR…GWLS), 274–294 (VVLA…LQPP), 301–321 (ATFI…FAWV), 333–353 (VTGI…LVMG), and 365–385 (VGLL…ALHA).

Belongs to the major facilitator superfamily. Nitrate/nitrite porter (TC 2.A.1.8) family.

Its subcellular location is the cell membrane. In terms of biological role, involved in excretion of nitrite produced by the dissimilatory reduction of nitrate. This is Probable nitrate/nitrite transporter NarK2 (narK2) from Mycobacterium tuberculosis (strain CDC 1551 / Oshkosh).